Consider the following 275-residue polypeptide: MNSFVIRNGFGLVRTFNTRLFTTSTQNLEGELKTILGQAKVSKLQEKLKLDPRSKITFNDFKGIAKEVGIEEKEINSVSNALAQSGSIIYLPNSLNENLKTSVFTKPAHIYQSLEHILDIENKGVGLNKLIESKKSEINSLRQKIQPLEEKKQVIDRKAHRRATAIIWTGLGYCFAQAAILARLTWWDLSWDIIEPVSYFLTFGSVLIGYTYFTMTKTEFTYEALNHRLFSKRQDKLFKRNNFPKEDYENLVQAIDKKEKELKELELATKYDHTH.

A mitochondrion-targeting transit peptide spans 1-28 (MNSFVIRNGFGLVRTFNTRLFTTSTQNL). Residues 29–165 (EGELKTILGQ…DRKAHRRATA (137 aa)) are Mitochondrial matrix-facing. Residues 125–157 (VGLNKLIESKKSEINSLRQKIQPLEEKKQVIDR) are a coiled coil. A helical transmembrane segment spans residues 166–186 (IIWTGLGYCFAQAAILARLTW). The Mitochondrial intermembrane portion of the chain corresponds to 187–192 (WDLSWD). Positions 191 to 199 (WDIIEPVSY) match the Selectivity filter motif. The helical transmembrane segment at 193–213 (IIEPVSYFLTFGSVLIGYTYF) threads the bilayer. Residue glutamate 195 coordinates Ca(2+). Residues 214-275 (TMTKTEFTYE…ELATKYDHTH (62 aa)) are Mitochondrial matrix-facing. Residues 244 to 270 (PKEDYENLVQAIDKKEKELKELELATK) adopt a coiled-coil conformation.

This sequence belongs to the MCU (TC 1.A.77) family. Homooligomer.

It is found in the mitochondrion inner membrane. It catalyses the reaction Ca(2+)(in) = Ca(2+)(out). Its activity is regulated as follows. Inhibited by ruthenium red or its derivative Ru360. In terms of biological role, mitochondrial inner membrane calcium uniporter that mediates calcium uptake into mitochondria. Constitutes a pore-forming and calcium-conducting subunit. Mitochondrial calcium homeostasis plays key roles in cellular physiology and regulates cell bioenergetics, cytoplasmic calcium signals and activation of cell death pathways. Sufficient to operate as a pore-forming channel without the need of calcium-sensor or auxiliary subunit. The chain is Calcium uniporter protein, mitochondrial from Dictyostelium discoideum (Social amoeba).